Reading from the N-terminus, the 227-residue chain is UPF0173 metal-dependent hydrolase BALH_4194 (227 aa).

Belongs to the UPF0173 family.

This is UPF0173 metal-dependent hydrolase BALH_4194 from Bacillus thuringiensis (strain Al Hakam).